We begin with the raw amino-acid sequence, 929 residues long: Band 3 anion transport protein (929 aa).

Met-1 is modified (N-acetylmethionine). The Cytoplasmic segment spans residues Met-1 to Pro-422. Ser-18 is subject to Phosphoserine. Tyr-31 and Tyr-56 each carry phosphotyrosine. Residues Ala-46–Ser-67 are disordered. The segment covering Pro-58–Ser-67 has biased composition (low complexity). The globular stretch occupies residues Gly-69–Thr-303. The segment at Ala-190 to Ser-199 is interaction with ANK1. Phosphoserine occurs at positions 199, 222, and 363. Residues Arg-317–Asn-370 are dimerization arm. The interval Lys-366–Asp-389 is disordered. Phosphotyrosine is present on Tyr-372. Thr-374 carries the post-translational modification Phosphothreonine. Residues Gln-423–Leu-446 form a helical membrane-spanning segment. The Extracellular portion of the chain corresponds to Gly-447 to Met-454. Residues Gly-455 to Ala-475 form a helical membrane-spanning segment. The Cytoplasmic segment spans residues Gln-476–Leu-478. The discontinuously helical transmembrane segment at Leu-479–Phe-495 threads the bilayer. The Extracellular portion of the chain corresponds to Ser-496–Glu-504. Residues Tyr-505 to Ala-525 form a helical membrane-spanning segment. Residues Phe-526–Arg-537 lie on the Cytoplasmic side of the membrane. The helical transmembrane segment at Tyr-538–Ile-560 threads the bilayer. The Extracellular segment spans residues Lys-561–Thr-588. A helical membrane pass occupies residues Ala-589–Phe-609. The Cytoplasmic portion of the chain corresponds to Lys-610–Arg-620. Residues Arg-621–Phe-641 form a helical membrane-spanning segment. The Extracellular segment spans residues Ile-642–Met-681. A glycan (N-linked (GlcNAc...) asparagine) is linked at Asn-660. Residues Met-682–Ile-702 form a helical membrane-spanning segment. Topologically, residues Thr-703–Ser-718 are cytoplasmic. A helical transmembrane segment spans residues Gly-719–Phe-737. Residues Gly-738–Ala-755 form a discontinuously helical membrane-spanning segment. The Cytoplasmic portion of the chain corresponds to Leu-756–Arg-778. 2 helical membrane-spanning segments follow: residues Ile-779–Ser-799 and Arg-800–Leu-818. Residues Ser-819–Gly-856 are Cytoplasmic-facing. An intramembrane region (discontinuously helical) is located at residues Ile-857–Leu-887. Cys-861 carries the S-palmitoyl cysteine lipid modification. Over Arg-888–Val-929 the chain is Cytoplasmic. Tyr-922 is modified (phosphotyrosine).

This sequence belongs to the anion exchanger (TC 2.A.31) family. As to quaternary structure, a dimer in solution, but in its membrane environment, it exists primarily as a mixture of dimers and tetramers and spans the membrane asymmetrically. Component of the ankyrin-1 complex in the erythrocyte, composed of ANK1, RHCE, RHAG, SLC4A1, EPB42, GYPA, GYPB and AQP1. Interacts with STOM; this interaction positively regulates SLC4A1 activity. Interacts with GYPA; a GYPA monomer is bound at each end of the SLC4A1 dimer forming a heterotetramer. Three SLC4A1 dimers (Band 3-I, Band 3-II and Band 3-III) participates in the ankyrin-1 complex. Interacts (via the cytoplasmic domain) with EPB42; this interaction is mediated by the SLC4A1 Band 3-I dimer. Interacts (via the cytoplasmic domain) directly with ANK1; this interaction is mediated by the SLC4A1 Band 3-II and Band 3-III dimers. Interacts with TMEM139. As to expression, detected in erythrocytes (at protein level).

The protein localises to the cell membrane. It is found in the basolateral cell membrane. The catalysed reaction is hydrogencarbonate(in) + chloride(out) = hydrogencarbonate(out) + chloride(in). In terms of biological role, functions both as a transporter that mediates electroneutral anion exchange across the cell membrane and as a structural protein. Component of the ankyrin-1 complex of the erythrocyte membrane; required for normal flexibility and stability of the erythrocyte membrane and for normal erythrocyte shape via the interactions of its cytoplasmic domain with cytoskeletal proteins, glycolytic enzymes, and hemoglobin. Functions as a transporter that mediates the 1:1 exchange of inorganic anions across the erythrocyte membrane. Mediates chloride-bicarbonate exchange in the kidney, and is required for normal acidification of the urine. This Mus musculus (Mouse) protein is Band 3 anion transport protein.